The primary structure comprises 78 residues: Large ribosomal subunit protein bL31 (78 aa).

The Zn(2+) site is built by Cys16, Cys18, Cys38, and Cys41.

This sequence belongs to the bacterial ribosomal protein bL31 family. Type A subfamily. As to quaternary structure, part of the 50S ribosomal subunit. The cofactor is Zn(2+).

Binds the 23S rRNA. The protein is Large ribosomal subunit protein bL31 of Frankia casuarinae (strain DSM 45818 / CECT 9043 / HFP020203 / CcI3).